The primary structure comprises 188 residues: Methylated-DNA--protein-cysteine methyltransferase (188 aa).

Tyr-120, Gly-121, and Arg-134 together coordinate DNA. Cys-151 serves as the catalytic Nucleophile; methyl group acceptor. Ser-157 contributes to the DNA binding site.

The protein belongs to the MGMT family.

It is found in the nucleus. The catalysed reaction is a 6-O-methyl-2'-deoxyguanosine in DNA + L-cysteinyl-[protein] = S-methyl-L-cysteinyl-[protein] + a 2'-deoxyguanosine in DNA. It carries out the reaction a 4-O-methyl-thymidine in DNA + L-cysteinyl-[protein] = a thymidine in DNA + S-methyl-L-cysteinyl-[protein]. Involved in the cellular defense against the biological effects of O6-methylguanine (O6-MeG) and O4-methylthymine (O4-MeT) in DNA. Repairs the methylated nucleobase in DNA by stoichiometrically transferring the methyl group to a cysteine residue in the enzyme. This is a suicide reaction: the enzyme is irreversibly inactivated. Prefers double-stranded DNA over single-stranded DNA as substrate. This chain is Methylated-DNA--protein-cysteine methyltransferase (MGT1), found in Saccharomyces cerevisiae (strain YJM789) (Baker's yeast).